Reading from the N-terminus, the 175-residue chain is Homeobox expressed in ES cells 1 (175 aa).

The interval 1–44 (MSPNLQEGARLVEGKPSSTSFSIESILGLDQKKDDAPSMKPHRP) is disordered. The segment at residues 108–167 (GRRPRTAFTQNQVEVLENVFRVNCYPGIDIREDLARKLNLEEDRIQIWFQNRRAKLKRSH) is a DNA-binding region (homeobox).

The protein belongs to the ANF homeobox family. In terms of assembly, interacts with TLE1.

The protein resides in the nucleus. Required for the normal development of the forebrain, eyes and other anterior structures such as the olfactory placodes and pituitary gland. Possible transcriptional repressor. Binds to the palindromic PIII sequence, 5'-AGCTTGAGTCTAATTGAATTAACTGTAC-3'. This chain is Homeobox expressed in ES cells 1 (HESX1), found in Oryctolagus cuniculus (Rabbit).